The following is a 122-amino-acid chain: Large ribosomal subunit protein uL14 (122 aa).

It belongs to the universal ribosomal protein uL14 family. As to quaternary structure, part of the 50S ribosomal subunit. Forms a cluster with proteins L3 and L19. In the 70S ribosome, L14 and L19 interact and together make contacts with the 16S rRNA in bridges B5 and B8.

Its function is as follows. Binds to 23S rRNA. Forms part of two intersubunit bridges in the 70S ribosome. This is Large ribosomal subunit protein uL14 from Methylorubrum populi (strain ATCC BAA-705 / NCIMB 13946 / BJ001) (Methylobacterium populi).